A 281-amino-acid polypeptide reads, in one-letter code: Nicotinamide/nicotinic acid mononucleotide adenylyltransferase 1 (281 aa).

G15 and S16 together coordinate beta-nicotinamide D-ribonucleotide. Residues G15, S16, F17, and M23 each contribute to the NAD(+) site. Residue 15–17 (GSF) coordinates ATP. An ATP-binding site is contributed by H24. Y55 and K57 together coordinate beta-nicotinamide D-ribonucleotide. Residue K57 participates in NAD(+) binding. Position 58 (K58) interacts with ATP. Residues W92 and T95 each coordinate beta-nicotinamide D-ribonucleotide. NAD(+) is bound by residues W92 and T95. The interval 113 to 143 (PQQNSPVLEKPGRKRKWAEQKQDISEKKSLE) is disordered. Position 117 is a phosphoserine (S117). The Nuclear localization signal motif lies at 123-129 (PGRKRKW). The span at 129–143 (WAEQKQDISEKKSLE) shows a compositional bias: basic and acidic residues. NAD(+) contacts are provided by G158, D160, L170, W171, E217, and N221. ATP is bound at residue 158–160 (GAD). Residues L170 and W171 each coordinate beta-nicotinamide D-ribonucleotide. 226–229 (TKIR) provides a ligand contact to ATP.

Belongs to the eukaryotic NMN adenylyltransferase family. As to quaternary structure, homohexamer. Interacts with ADPRT/PARP1. Requires Zn(2+) as cofactor. It depends on Mg(2+) as a cofactor.

It is found in the nucleus. The enzyme catalyses beta-nicotinamide D-ribonucleotide + ATP + H(+) = diphosphate + NAD(+). It catalyses the reaction nicotinate beta-D-ribonucleotide + ATP + H(+) = deamido-NAD(+) + diphosphate. The protein operates within cofactor biosynthesis; NAD(+) biosynthesis; NAD(+) from nicotinamide D-ribonucleotide: step 1/1. It participates in cofactor biosynthesis; NAD(+) biosynthesis; deamido-NAD(+) from nicotinate D-ribonucleotide: step 1/1. With respect to regulation, activity is strongly inhibited by galotannin. Inhibited by P1-(adenosine-5')-P4-(nicotinic-acid-riboside-5')-tetraphosphate (Nap4AD). Its function is as follows. Catalyzes the formation of NAD(+) from nicotinamide mononucleotide (NMN) and ATP. Can also use the deamidated form; nicotinic acid mononucleotide (NaMN) as substrate with the same efficiency. Can use triazofurin monophosphate (TrMP) as substrate. Also catalyzes the reverse reaction, i.e. the pyrophosphorolytic cleavage of NAD(+). For the pyrophosphorolytic activity, prefers NAD(+) and NaAD as substrates and degrades NADH, nicotinic acid adenine dinucleotide phosphate (NHD) and nicotinamide guanine dinucleotide (NGD) less effectively. Involved in the synthesis of ATP in the nucleus, together with PARP1, PARG and NUDT5. Nuclear ATP generation is required for extensive chromatin remodeling events that are energy-consuming. Fails to cleave phosphorylated dinucleotides NADP(+), NADPH and NaADP(+). Also acts as a cofactor for glutamate and aspartate ADP-ribosylation by directing PARP1 catalytic activity to glutamate and aspartate residues on histones. Protects against axonal degeneration following mechanical or toxic insults. Delays axonal degeneration after axotomy. Results in a &gt;10-fold increase in intact neurites 72 hours after injury. Neural protection does not correlate with cellular NAD(+) levels but may still require enzyme activity. The polypeptide is Nicotinamide/nicotinic acid mononucleotide adenylyltransferase 1 (NMNAT1) (Bos taurus (Bovine)).